A 310-amino-acid polypeptide reads, in one-letter code: MDFVAGAIGGVCGVAVGYPLDTVKVRIQTEAKYAGIWHCIRDTYRQERVWGFYRGLSLPVCTVSLVSSVSFGTYHHCLAHICRFRYGSTDAKPTKADITLSGCASGLVRVFLTSPTEVAKVRLQTQTQAQTQQRRSSASWTSGAPALCPTPTACLEPRPKYSGPLHCLVTVAREEGLRGLYKGSSALLLREGHSFATYFLSYAMLCEWLTPAGHSQPDVLGVLVAGGCAGVLAWAVATPMDVIKSRLQADGQGQHRYRGLLHCVVTSVREEGPRVLFKGLALNCCRAFPVNMVVFVAYEAVLRLTQSLLT.

3 Solcar repeats span residues 1–80 (MDFV…CLAH), 93–208 (PTKA…LCEW), and 217–304 (PDVL…VLRL). A run of 6 helical transmembrane segments spans residues 3–23 (FVAGAIGGVCGVAVGYPLDTV), 55–75 (GLSLPVCTVSLVSSVSFGTYH), 98–114 (ITLSGCASGLVRVFLTS), 194–210 (SFATYFLSYAMLCEWLT), 219–239 (VLGVLVAGGCAGVLAWAVATP), and 280–298 (LALNCCRAFPVNMVVFVAY).

The protein belongs to the mitochondrial carrier (TC 2.A.29) family. Specifically expressed in liver (at protein level).

It is found in the mitochondrion inner membrane. The protein resides in the mitochondrion outer membrane. It carries out the reaction NAD(+)(in) = NAD(+)(out). The enzyme catalyses acetyl-CoA(in) = acetyl-CoA(out). In terms of biological role, mitochondrial NAD(+) transporter that acts as a 'metabolic gate' in hepatic lipogenesis. Provides NAD(+) substrate to mitochondrial SIRT3 deacetylase and enables its NAD(+)-dependent activities in mitochondrial energy metabolism. This triggers downstream activation of PRKAA1/AMPK-alpha signaling cascade that negatively regulates sterol regulatory element-binding protein (SREBP) transcriptional activities and ATP-consuming lipogenesis to restore cellular energy balance. May transport other mitochondrial metabolites having an aromatic nucleotide and phosphate groups, such as acetyl-CoA. Does not transport amino acids. The transport mechanism remains to be elucidated. This is Solute carrier family 25 member 47 from Mus musculus (Mouse).